The primary structure comprises 146 residues: Large ribosomal subunit protein uL15 (146 aa).

Residues 1–18 are compositionally biased toward basic and acidic residues; the sequence is MKLHELKPAEGSRKERNR. The tract at residues 1–54 is disordered; the sequence is MKLHELKPAEGSRKERNRVGRGVATGNGKTSGRGHKGQKARSGGGVRPGFEGGQ. Residues 42–52 show a composition bias toward gly residues; that stretch reads SGGGVRPGFEG.

It belongs to the universal ribosomal protein uL15 family. Part of the 50S ribosomal subunit.

Functionally, binds to the 23S rRNA. This Staphylococcus aureus (strain Mu3 / ATCC 700698) protein is Large ribosomal subunit protein uL15.